The chain runs to 596 residues: Pentatricopeptide repeat-containing protein At1g80270, mitochondrial (596 aa).

A mitochondrion-targeting transit peptide spans 1–69 (MFALSKVLRR…RALSSSAGTK (69 aa)). Residues 62 to 119 (LSSSAGTKSDQEEDDLEDGFSELEGSKSGQGSTSSDEDEGKLSADEEEEEELDLIETD) form a disordered region. 2 stretches are compositionally biased toward acidic residues: residues 72–82 (QEEDDLEDGFS) and 96–117 (SDEDEGKLSADEEEEEELDLIE). PPR repeat units lie at residues 228 to 262 (GEVLYRTLLANCVAAGNVKKSELVFNKMKDLGFPL), 263 to 296 (SGFTCDQMLLLHKRIDRKKIADVLLLMEKENIKP), 297 to 331 (SLLTYKILIDVKGATNDISGMEQILETMKDEGVEL), 332 to 366 (DFQTQALTARHYSGAGLKDKAEKVLKEMEGESLEA), 367 to 397 (NRRAFKDLLSIYASLGREDEVKRIWKICESK), 399 to 433 (YFEESLAAIQAFGKLNKVQEAEAIFEKIVKMDRRA), 434 to 468 (SSSTYSVLLRVYVDHKMLSKGKDLVKRMAESGCRI), 469 to 503 (EATTWDALIKLYVEAGEVEKADSLLDKASKQSHTK), and 505 to 539 (MMNSFMYIMDEYSKRGDVHNTEKIFLKMREAGYTS).

It belongs to the PPR family. P subfamily.

It localises to the mitochondrion. The chain is Pentatricopeptide repeat-containing protein At1g80270, mitochondrial from Arabidopsis thaliana (Mouse-ear cress).